Here is a 288-residue protein sequence, read N- to C-terminus: Homoserine kinase (288 aa).

Position 79–89 (79–89 (PLARGLGSSSS)) interacts with ATP.

The protein belongs to the GHMP kinase family. Homoserine kinase subfamily.

It localises to the cytoplasm. The catalysed reaction is L-homoserine + ATP = O-phospho-L-homoserine + ADP + H(+). Its pathway is amino-acid biosynthesis; L-threonine biosynthesis; L-threonine from L-aspartate: step 4/5. Its function is as follows. Catalyzes the ATP-dependent phosphorylation of L-homoserine to L-homoserine phosphate. In Streptococcus gordonii (strain Challis / ATCC 35105 / BCRC 15272 / CH1 / DL1 / V288), this protein is Homoserine kinase.